Consider the following 378-residue polypeptide: Lipid-A-disaccharide synthase (378 aa).

This sequence belongs to the LpxB family.

The catalysed reaction is a lipid X + a UDP-2-N,3-O-bis[(3R)-3-hydroxyacyl]-alpha-D-glucosamine = a lipid A disaccharide + UDP + H(+). The protein operates within bacterial outer membrane biogenesis; LPS lipid A biosynthesis. Functionally, condensation of UDP-2,3-diacylglucosamine and 2,3-diacylglucosamine-1-phosphate to form lipid A disaccharide, a precursor of lipid A, a phosphorylated glycolipid that anchors the lipopolysaccharide to the outer membrane of the cell. In Pseudomonas aeruginosa (strain LESB58), this protein is Lipid-A-disaccharide synthase.